We begin with the raw amino-acid sequence, 119 residues long: Ornithodorin (119 aa).

The region spanning 1 to 53 (LNVLCNNPHTADCNNDAQVDRYFREGTTCLMSPACTSEGYASQHECQQACFVG) is the BPTI/Kunitz inhibitor 1 domain. 3 disulfide bridges follow: Cys5/Cys50, Cys13/Cys35, and Cys29/Cys46. The tract at residues 54 to 60 (GEDHSSE) is linker. A BPTI/Kunitz inhibitor 2 domain is found at 61 to 116 (MHSSCLGDPPTSCAEGTDITYYDSDSKTCKVLAASCPSGENTFESEVECQVACGAP). Intrachain disulfides connect Cys65–Cys113, Cys73–Cys96, and Cys89–Cys109.

As to expression, expressed in salivary glands.

The protein resides in the cytoplasmic vesicle. Its subcellular location is the secretory vesicle. The protein localises to the secreted. Tick salivary thrombin inhibitor that plays an important part in the anti-hemostatic strategy of ticks. Is a potent and highly selective thrombin inhibitor (Ki=10 pM). This Ornithodoros moubata (Soft tick) protein is Ornithodorin.